We begin with the raw amino-acid sequence, 259 residues long: 14-3-3-like protein (259 aa).

Residues 238-259 are disordered; it reads MQDPAAGDDREGADMKVEDAEP. Positions 244 to 259 are enriched in basic and acidic residues; sequence GDDREGADMKVEDAEP.

This sequence belongs to the 14-3-3 family.

This Chlamydomonas reinhardtii (Chlamydomonas smithii) protein is 14-3-3-like protein.